A 491-amino-acid polypeptide reads, in one-letter code: Large ribosomal subunit protein mL101 (rPPR4) (491 aa).

PPR repeat units lie at residues T122–P156, S157–P191, D192–A226, D228–R262, D263–A293, S298–N328, D333–L367, and N368–D402.

Belongs to the PPR family. P subfamily. In terms of assembly, component of the mitochondrial ribosome large subunit.

The protein localises to the mitochondrion. This chain is Large ribosomal subunit protein mL101 (rPPR4), found in Arabidopsis thaliana (Mouse-ear cress).